The following is a 311-amino-acid chain: Cytosolic Fe-S cluster assembly factor Nubp1 homolog (311 aa).

[4Fe-4S] cluster-binding residues include cysteine 9, cysteine 23, cysteine 26, and cysteine 32. ATP is bound at residue 63 to 70 (GKGGVGKS). Cysteine 241 and cysteine 244 together coordinate [4Fe-4S] cluster.

It belongs to the Mrp/NBP35 ATP-binding proteins family. NUBP1/NBP35 subfamily. As to quaternary structure, heterotetramer of 2 Nubp1 and 2 Nubp2 chains. [4Fe-4S] cluster serves as cofactor.

The protein localises to the cytoplasm. Functionally, component of the cytosolic iron-sulfur (Fe/S) protein assembly (CIA) machinery. Required for maturation of extramitochondrial Fe-S proteins. The Nubp1-Nubp2 heterotetramer forms a Fe-S scaffold complex, mediating the de novo assembly of an Fe-S cluster and its transfer to target apoproteins. In Drosophila grimshawi (Hawaiian fruit fly), this protein is Cytosolic Fe-S cluster assembly factor Nubp1 homolog.